The sequence spans 611 residues: Probable Xaa-Pro aminopeptidase P (611 aa).

The Mn(2+) site is built by Asp-408, Asp-419, Glu-517, and Glu-531.

This sequence belongs to the peptidase M24B family. Mn(2+) is required as a cofactor.

The catalysed reaction is Release of any N-terminal amino acid, including proline, that is linked to proline, even from a dipeptide or tripeptide.. Its function is as follows. Catalyzes the removal of a penultimate prolyl residue from the N-termini of peptides. The chain is Probable Xaa-Pro aminopeptidase P (AMPP) from Coccidioides posadasii (strain RMSCC 757 / Silveira) (Valley fever fungus).